We begin with the raw amino-acid sequence, 331 residues long: Glycerophosphodiester phosphodiesterase 1 (331 aa).

Over 1–2 (MW) the chain is Cytoplasmic. A helical membrane pass occupies residues 3–23 (LWEEQGGLMGPFSFLLLVLLL). The Lumenal portion of the chain corresponds to 24–254 (LTRSPFNACL…WKQSMFVALD (231 aa)). A GP-PDE domain is found at 65-331 (VSAIAHRGGS…SMLEDCTPEF (267 aa)). Mg(2+)-binding residues include E97 and D99. The N-linked (GlcNAc...) asparagine glycan is linked to N168. D174 lines the Mg(2+) pocket. Residue N198 is glycosylated (N-linked (GlcNAc...) asparagine). A helical transmembrane segment spans residues 255–275 (ILLDWSMHNILWYLCGVSAFL). The Cytoplasmic portion of the chain corresponds to 276–331 (AQKDFISPDYVKKWSAKGIQVVAWTVNTFDEKSYYESHLGSSYITDSMLEDCTPEF).

The protein belongs to the glycerophosphoryl diester phosphodiesterase family. Interacts with PRAF2. Interacts with RGS16. Mg(2+) is required as a cofactor. N-glycosylated.

The protein resides in the cell membrane. It is found in the cytoplasmic vesicle membrane. It carries out the reaction sn-glycero-3-phospho-1D-myo-inositol + H2O = myo-inositol + sn-glycerol 3-phosphate + H(+). The enzyme catalyses 1-O-(1Z-octadecenyl)-sn-glycero-3-phospho-(N-5Z,8Z,11Z,14Z-eicosatetraenoyl)-ethanolamine + H2O = 1-O-(1Z-octadecenyl)-sn-glycero-3-phosphate + N-(5Z,8Z,11Z,14Z-eicosatetraenoyl)-ethanolamine + H(+). The catalysed reaction is 1-O-(1Z-octadecenyl)-sn-glycero-3-phospho-(N-9Z-octadecenoyl)-ethanolamine + H2O = 1-O-(1Z-octadecenyl)-sn-glycero-3-phosphate + N-(9Z-octadecenoyl) ethanolamine + H(+). It catalyses the reaction 1-O-(1Z-octadecenyl)-sn-glycero-3-phospho-N-hexadecanoyl-ethanolamine + H2O = 1-O-(1Z-octadecenyl)-sn-glycero-3-phosphate + N-hexadecanoylethanolamine + H(+). It carries out the reaction N-(4Z,7Z,10Z,13Z,16Z,19Z)-docosahexaenoyl-sn-glycero-3-phosphoethanolamine + H2O = N-(4Z,7Z,10Z,13Z,16Z,19Z)-docosahexaenoyl ethanolamine + sn-glycerol 3-phosphate + H(+). The enzyme catalyses N-eicosanoyl-sn-glycero-3-phosphoethanolamine + H2O = N-eicosanoyl ethanolamine + sn-glycerol 3-phosphate + H(+). The catalysed reaction is N-hexadecanoyl-sn-glycero-3-phosphoethanolamine + H2O = N-hexadecanoylethanolamine + sn-glycerol 3-phosphate + H(+). It catalyses the reaction N-(9Z-octadecenoyl)-sn-glycero-3-phosphoethanolamine + H2O = N-(9Z-octadecenoyl) ethanolamine + sn-glycerol 3-phosphate + H(+). It carries out the reaction N-(5Z,8Z,11Z,14Z-eicosatetraenoyl)-sn-glycero-3-phosphoethanolamine + H2O = N-(5Z,8Z,11Z,14Z-eicosatetraenoyl)-ethanolamine + sn-glycerol 3-phosphate + H(+). With respect to regulation, inhibited by EDTA, calcium chloride, and zinc chloride. Enhanced by magnesium chloride. Glycerophosphodiester phosphodiesterase activity can be modulated by G-protein signaling pathways. Hydrolyzes the phosphodiester bond of glycerophosphodiesters such as glycerophosphoinositol (GroPIns) and glycerophosphoethanolamine (GroPEth), to yield a glycerol phosphate and an alcohol. Hydrolyzes glycerophospho-N-acylethanolamines to N-acylethanolamines in the brain and participates in bioactive N-acylethanolamine biosynthesis such as anandamide (an endocannabinoid), N-palmitoylethanolamine (an anti-inflammatory), and N-oleoylethanolamine (an anorexic). In addition, has a lysophospholipase D activity by hydrolyzing N-acyl-lysoplasmenylethanolamine (N-acyl-lysoPlsEt) to N-acylethanolamine. However lysophospholipase D activity is lower than glycerophosphodiester phosphodiesterase activity. Has little or no activity towards glycerophosphocholine. This chain is Glycerophosphodiester phosphodiesterase 1, found in Bos taurus (Bovine).